Here is a 129-residue protein sequence, read N- to C-terminus: Large ribosomal subunit protein bL19 (129 aa).

This sequence belongs to the bacterial ribosomal protein bL19 family.

Functionally, this protein is located at the 30S-50S ribosomal subunit interface and may play a role in the structure and function of the aminoacyl-tRNA binding site. In Bordetella avium (strain 197N), this protein is Large ribosomal subunit protein bL19.